Consider the following 507-residue polypeptide: ATP synthase subunit beta (507 aa).

Residues 1–22 are disordered; it reads MSGLASKAKSRVKSSKGKNSTN. 183-190 contacts ATP; the sequence is GGAGVGKT.

It belongs to the ATPase alpha/beta chains family. As to quaternary structure, F-type ATPases have 2 components, CF(1) - the catalytic core - and CF(0) - the membrane proton channel. CF(1) has five subunits: alpha(3), beta(3), gamma(1), delta(1), epsilon(1). CF(0) has three main subunits: a(1), b(2) and c(9-12). The alpha and beta chains form an alternating ring which encloses part of the gamma chain. CF(1) is attached to CF(0) by a central stalk formed by the gamma and epsilon chains, while a peripheral stalk is formed by the delta and b chains.

It is found in the cell inner membrane. It carries out the reaction ATP + H2O + 4 H(+)(in) = ADP + phosphate + 5 H(+)(out). Produces ATP from ADP in the presence of a proton gradient across the membrane. The catalytic sites are hosted primarily by the beta subunits. The polypeptide is ATP synthase subunit beta (Ehrlichia chaffeensis (strain ATCC CRL-10679 / Arkansas)).